The chain runs to 193 residues: ATP-dependent Clp protease proteolytic subunit (193 aa).

Serine 98 serves as the catalytic Nucleophile. Histidine 123 is an active-site residue.

It belongs to the peptidase S14 family. As to quaternary structure, fourteen ClpP subunits assemble into 2 heptameric rings which stack back to back to give a disk-like structure with a central cavity, resembling the structure of eukaryotic proteasomes.

It localises to the cytoplasm. The enzyme catalyses Hydrolysis of proteins to small peptides in the presence of ATP and magnesium. alpha-casein is the usual test substrate. In the absence of ATP, only oligopeptides shorter than five residues are hydrolyzed (such as succinyl-Leu-Tyr-|-NHMec, and Leu-Tyr-Leu-|-Tyr-Trp, in which cleavage of the -Tyr-|-Leu- and -Tyr-|-Trp bonds also occurs).. Cleaves peptides in various proteins in a process that requires ATP hydrolysis. Has a chymotrypsin-like activity. Plays a major role in the degradation of misfolded proteins. The chain is ATP-dependent Clp protease proteolytic subunit from Glaesserella parasuis serovar 5 (strain SH0165) (Haemophilus parasuis).